Consider the following 627-residue polypeptide: Transducer protein MpcT (627 aa).

A run of 2 helical transmembrane segments spans residues 28–48 (MLTA…LTVF) and 55–75 (LIGV…TYLI). 2 HAMP domains span residues 78–132 (ADFV…VASR) and 192–247 (EQLR…DTIS). A Methyl-accepting transducer domain is found at 266–502 (RVDAVADRSA…DVVGMVEEVA (237 aa)). Glu310, Glu416, and Glu507 each carry glutamate methyl ester (Glu). Disordered regions lie at residues 505–527 (SEET…DATD) and 557–627 (GTAD…ADSQ). The segment covering 580–590 (AAAVVDQPQPA) has biased composition (low complexity).

Belongs to the methyl-accepting chemotaxis (MCP) protein family. In terms of assembly, interacts with CheA, CheY and CheW1. Methylated by CheR.

The protein localises to the cell membrane. Its function is as follows. Mediates bacteriorhodopsin- and halorhodopsin-dependent photoresponses by detecting membrane potential changes. Probably transduces the signal to the histidine kinase CheA. The polypeptide is Transducer protein MpcT (mpcT) (Halobacterium salinarum (strain ATCC 29341 / DSM 671 / R1)).